A 500-amino-acid chain; its full sequence is NAD(P)H-quinone oxidoreductase chain 4, chloroplastic (500 aa).

Helical transmembrane passes span 4 to 24, 37 to 57, 87 to 107, 113 to 130, 134 to 154, 167 to 187, 208 to 228, 242 to 262, 272 to 292, 305 to 325, 330 to 350, 386 to 406, 416 to 436, and 462 to 482; these read FPWL…IGFL, ICIC…HFQL, MGPV…AWPV, LFHF…GSFS, LLLF…LLSL, FILY…GMGL, ALEI…SPII, HYST…YGLV, AHSI…IYAA, IAYS…SITD, GSIL…FLAG, LALP…GIIT, ILIT…SLSM, and LFIL…PDFV.

The protein belongs to the complex I subunit 4 family.

Its subcellular location is the plastid. It localises to the chloroplast thylakoid membrane. It catalyses the reaction a plastoquinone + NADH + (n+1) H(+)(in) = a plastoquinol + NAD(+) + n H(+)(out). The enzyme catalyses a plastoquinone + NADPH + (n+1) H(+)(in) = a plastoquinol + NADP(+) + n H(+)(out). In Illicium oligandrum (Star anise), this protein is NAD(P)H-quinone oxidoreductase chain 4, chloroplastic.